We begin with the raw amino-acid sequence, 563 residues long: Lipase 1 (563 aa).

An N-terminal signal peptide occupies residues 1 to 19 (MVSKTFFLAAALNVVGTLA). Glutamine 20 carries the post-translational modification Pyrrolidone carboxylic acid. Cysteine 80 and cysteine 124 are disulfide-bonded. The active-site Acyl-ester intermediate is the serine 236. An intrachain disulfide couples cysteine 295 to cysteine 307. Asparagine 302 carries an N-linked (GlcNAc...) asparagine glycan. Residue glutamate 373 is the Charge relay system of the active site. An N-linked (GlcNAc...) asparagine glycan is attached at asparagine 383. The active-site Charge relay system is the histidine 482.

This sequence belongs to the type-B carboxylesterase/lipase family. As to quaternary structure, monomer.

The protein localises to the secreted. It catalyses the reaction a triacylglycerol + H2O = a diacylglycerol + a fatty acid + H(+). Functionally, hydrolyzes all ester bonds in triglyceride and displays a high affinity for triolein. For unsaturated substrates having long fatty acyl chains (C18:2 cis-9, cis-12 and C18:3 cis-9, cis-12, cis-15) GCL I shows higher specific activity than GCL II, whereas GCL II shows higher specific activity against saturated substrates having short fatty acid chains (C8, C10, C12 and C14). The protein is Lipase 1 (LIP1) of Geotrichum candidum (Oospora lactis).